The primary structure comprises 93 residues: Zinc metalloproteinase-disintegrin-like leucurogin (93 aa).

In terms of domain architecture, Disintegrin spans 8–93 (PPVCGNELLE…SECPADVGHK (86 aa)). Residues Val-10, Asn-13, Leu-15, Glu-17, Glu-20, and Asp-23 each contribute to the Ca(2+) site. Disulfide bonds link Cys-11-Cys-40, Cys-22-Cys-35, Cys-24-Cys-30, Cys-34-Cys-57, Cys-48-Cys-54, Cys-53-Cys-79, and Cys-66-Cys-86. The short motif at 72 to 74 (ECD) is the D/ECD-tripeptide element. Ca(2+) contacts are provided by Asp-74, Pro-75, Glu-77, Asp-89, and Val-90. Residues 74–93 (DPAEHCTGQSSECPADVGHK) are disordered.

The protein belongs to the venom metalloproteinase (M12B) family. P-III subfamily. In terms of assembly, monomer. Requires Zn(2+) as cofactor. In terms of processing, N-glycosylated. Expressed by the venom gland.

It localises to the secreted. Functionally, snake venom zinc metalloprotease that possesses hemorrhagic activity. The disintegrin-like domain has been expressed and named leucurogin. This recombinant disintegrin is able to inhibit collagen-induced platelet aggregation but not ADP- or arachidonic acid-induced platelet aggregation. Furthermore, it inhibits the adhesion of human fibroblasts to collagen type I. It also reduces adhesion and migration of human fibroblasts and inhibits migration and proliferation of human and mouse melanoma cell lines (BLM, and B16-F10-Nex2). In vitro, it inhibits the vascular structures formation by endothelial cells. In addition, it inhibits the growth of experimental Ehrlich tumor and has anti-angiogenesis effect on the sponge implant model. In vivo, when intraperitoneally injected into mice, it inhibits lung metastasis of B16F10 Nex-2 cells. In the treatment of human melanoma, grafted intradermally in the nude mice flank, it inhibits tumor growth. The polypeptide is Zinc metalloproteinase-disintegrin-like leucurogin (Bothrops leucurus (Whitetail lancehead)).